The primary structure comprises 129 residues: Small ribosomal subunit protein uS11 (129 aa).

The protein belongs to the universal ribosomal protein uS11 family. In terms of assembly, part of the 30S ribosomal subunit. Interacts with proteins S7 and S18. Binds to IF-3.

Located on the platform of the 30S subunit, it bridges several disparate RNA helices of the 16S rRNA. Forms part of the Shine-Dalgarno cleft in the 70S ribosome. The sequence is that of Small ribosomal subunit protein uS11 from Maridesulfovibrio salexigens (strain ATCC 14822 / DSM 2638 / NCIMB 8403 / VKM B-1763) (Desulfovibrio salexigens).